Reading from the N-terminus, the 240-residue chain is MATLFIADLHLQTEEPAIVAGFLRFLAVEARQADALYILGDLFEAWIGDDDPNPLHREIAAAIKAVVNVGVPCFFIHGNRDFLIGKRFARESGMILLPQEKVLDLYGRNVLIMHGDTLCTDDAGYQAFRAKVHNPWVQRLFLTLPLFIRRRIAARMRAGSKAANSSKSLDIMDVNAQTVVAEMEKHRVQWLIHGHTHRPAVHELSANDQPAFRVVLGAWHHEGSMVKVTPDNVELIAFPL.

Mn(2+) contacts are provided by D8, H10, D41, N79, and H114. Residue 79-80 (NR) coordinates substrate. Substrate contacts are provided by D122, S160, N164, K167, and H195. Residues H195 and H197 each coordinate Mn(2+).

This sequence belongs to the LpxH family. Requires Mn(2+) as cofactor.

Its subcellular location is the cell inner membrane. It carries out the reaction UDP-2-N,3-O-bis[(3R)-3-hydroxytetradecanoyl]-alpha-D-glucosamine + H2O = 2-N,3-O-bis[(3R)-3-hydroxytetradecanoyl]-alpha-D-glucosaminyl 1-phosphate + UMP + 2 H(+). It functions in the pathway glycolipid biosynthesis; lipid IV(A) biosynthesis; lipid IV(A) from (3R)-3-hydroxytetradecanoyl-[acyl-carrier-protein] and UDP-N-acetyl-alpha-D-glucosamine: step 4/6. Hydrolyzes the pyrophosphate bond of UDP-2,3-diacylglucosamine to yield 2,3-diacylglucosamine 1-phosphate (lipid X) and UMP by catalyzing the attack of water at the alpha-P atom. Involved in the biosynthesis of lipid A, a phosphorylated glycolipid that anchors the lipopolysaccharide to the outer membrane of the cell. The protein is UDP-2,3-diacylglucosamine hydrolase of Salmonella dublin (strain CT_02021853).